The sequence spans 586 residues: Homothallic switching endonuclease (586 aa).

The 156-residue stretch at 215 to 370 (MLGLWLGDST…IVHISRSLGM (156 aa)) folds into the DOD-type homing endonuclease domain.

In terms of processing, rapidly degraded via the ubiquitin-26S proteasome system through two ubiquitin-conjugating enzymes UBC2/RAD6 and UBC3/CDC34.

It localises to the nucleus. Functionally, initiation of mating type interconversion. This protein is a site-specific endonuclease that cleaves a site in the mat locus on chromosome III. The double-strand break is followed by a unidirectional gene conversion event that replaces the information at the mat locus by information copied from either of the two homologous loci (HMR and HML) that reside at the extremity of the chromosome III. Endonuclease expression takes place in late G1 just before cells enter S phase. In Saccharomyces cerevisiae (strain ATCC 204508 / S288c) (Baker's yeast), this protein is Homothallic switching endonuclease (HO).